A 473-amino-acid chain; its full sequence is Photosystem II CP43 reaction center protein (473 aa).

Residues 1–14 constitute a propeptide that is removed on maturation; that stretch reads MKTLYSLRRFYPVE. Position 15 is an N-acetylthreonine (Thr-15). Thr-15 is subject to Phosphothreonine. Transmembrane regions (helical) follow at residues 69–93, 134–155, 178–200, 255–275, and 291–312; these read LFEVAHFVPEKPMYEQGLILLPHLA, LLGPETLEESFPFFGYVWKDRN, KALYFGGVYDTWAPGGGDVRKIT, KPFAWARRAFVWSGEAYLSYS, and WFNNTAYPSEFYGPTGPEASQA. [CaMn4O5] cluster is bound at residue Glu-367. A helical transmembrane segment spans residues 447-471; that stretch reads RARAAAAGFEKGIDRDFEPVLSMTP.

Belongs to the PsbB/PsbC family. PsbC subfamily. In terms of assembly, PSII is composed of 1 copy each of membrane proteins PsbA, PsbB, PsbC, PsbD, PsbE, PsbF, PsbH, PsbI, PsbJ, PsbK, PsbL, PsbM, PsbT, PsbX, PsbY, PsbZ, Psb30/Ycf12, at least 3 peripheral proteins of the oxygen-evolving complex and a large number of cofactors. It forms dimeric complexes. Binds multiple chlorophylls and provides some of the ligands for the Ca-4Mn-5O cluster of the oxygen-evolving complex. It may also provide a ligand for a Cl- that is required for oxygen evolution. PSII binds additional chlorophylls, carotenoids and specific lipids. serves as cofactor.

Its subcellular location is the plastid. It localises to the chloroplast thylakoid membrane. Its function is as follows. One of the components of the core complex of photosystem II (PSII). It binds chlorophyll and helps catalyze the primary light-induced photochemical processes of PSII. PSII is a light-driven water:plastoquinone oxidoreductase, using light energy to abstract electrons from H(2)O, generating O(2) and a proton gradient subsequently used for ATP formation. The chain is Photosystem II CP43 reaction center protein from Calycanthus floridus var. glaucus (Eastern sweetshrub).